A 254-amino-acid polypeptide reads, in one-letter code: PSME3-interacting protein (254 aa).

Residue M1 is modified to N-acetylmethionine. S17 bears the Phosphoserine mark. Residues 22 to 39 (DERRKRRQEEWEKVRKPE) are compositionally biased toward basic and acidic residues. Positions 22-52 (DERRKRRQEEWEKVRKPEDPEECPEEVYDPR) are disordered. The residue at position 139 (K139) is an N6-acetyllysine. A disordered region spans residues 155-195 (GAVKHKSSESGNSVKRLKPDPEPDDKNQEPSSCKSLGNTSL). Residues 171–182 (LKPDPEPDDKNQ) show a composition bias toward basic and acidic residues. The span at 183-195 (EPSSCKSLGNTSL) shows a compositional bias: polar residues. The segment at 201 to 254 (HCPSAAVCIGILPGLGAYSGSSDSESSSDSEGTINATGKIVSSIFRTNTFLEAP) is interaction with PSME3. S222 and S228 each carry phosphoserine; by CK2.

In terms of assembly, interacts (via C-terminus) with both free and 20S proteasome-bound forms of the proteasome activator complex subunit PSME3; the interaction is direct. In terms of processing, phosphorylation by CK2 stabilizes the interaction with PSME3.

It localises to the nucleus. In terms of biological role, promotes the association of the proteasome activator complex subunit PSME3 with the 20S proteasome and regulates its activity. Inhibits PSME3-mediated degradation of some proteasome substrates, probably by affecting their diffusion rate into the catalytic chamber of the proteasome. Also inhibits the interaction of PSME3 with COIL, inhibits accumulation of PSME3 in Cajal bodies and positively regulates the number of Cajal bodies in the nucleus. The sequence is that of PSME3-interacting protein from Homo sapiens (Human).